The chain runs to 94 residues: Putative pterin-4-alpha-carbinolamine dehydratase (94 aa).

Belongs to the pterin-4-alpha-carbinolamine dehydratase family.

It carries out the reaction (4aS,6R)-4a-hydroxy-L-erythro-5,6,7,8-tetrahydrobiopterin = (6R)-L-erythro-6,7-dihydrobiopterin + H2O. The protein is Putative pterin-4-alpha-carbinolamine dehydratase of Mycobacterium tuberculosis (strain ATCC 25177 / H37Ra).